Consider the following 94-residue polypeptide: Co-chaperonin GroES (94 aa).

This sequence belongs to the GroES chaperonin family. Heptamer of 7 subunits arranged in a ring. Interacts with the chaperonin GroEL.

The protein resides in the cytoplasm. Its function is as follows. Together with the chaperonin GroEL, plays an essential role in assisting protein folding. The GroEL-GroES system forms a nano-cage that allows encapsulation of the non-native substrate proteins and provides a physical environment optimized to promote and accelerate protein folding. GroES binds to the apical surface of the GroEL ring, thereby capping the opening of the GroEL channel. The chain is Co-chaperonin GroES from Ruminiclostridium cellulolyticum (strain ATCC 35319 / DSM 5812 / JCM 6584 / H10) (Clostridium cellulolyticum).